We begin with the raw amino-acid sequence, 229 residues long: 2-C-methyl-D-erythritol 4-phosphate cytidylyltransferase (229 aa).

Belongs to the IspD/TarI cytidylyltransferase family. IspD subfamily.

It catalyses the reaction 2-C-methyl-D-erythritol 4-phosphate + CTP + H(+) = 4-CDP-2-C-methyl-D-erythritol + diphosphate. The protein operates within isoprenoid biosynthesis; isopentenyl diphosphate biosynthesis via DXP pathway; isopentenyl diphosphate from 1-deoxy-D-xylulose 5-phosphate: step 2/6. Catalyzes the formation of 4-diphosphocytidyl-2-C-methyl-D-erythritol from CTP and 2-C-methyl-D-erythritol 4-phosphate (MEP). This Bacillus pumilus (strain SAFR-032) protein is 2-C-methyl-D-erythritol 4-phosphate cytidylyltransferase.